The primary structure comprises 152 residues: ARL14 effector protein-like (152 aa).

Polar residues predominate over residues 1–16 (MTEPSQKNNSTQQELT). The disordered stretch occupies residues 1–27 (MTEPSQKNNSTQQELTNHLFPEKSSQI).

The protein is ARL14 effector protein-like (Arl14epl) of Mus musculus (Mouse).